Consider the following 337-residue polypeptide: MVDTHGQPLKLGYKASAEQFAPGKLADFAVQAEEQGLDSVWISDHFQPWRHVDGHAPSALVWLPWVAAKTSRVQLGTSVLTPTLRYNPAVIAQAFATLGCLAPGRAILGIGTGEALNETAVGVTFPETRERFARLREAVRLIKQLWSEERVTFEGEYYNLHDATVYDRPEQPVPIYVAAGGPGVTKYAGRAGDGYICTSGKGMDLYSETLLPALREGLEASGRTEGQIDRTIEIKLSFDEDPAQALENTRFWAPLSLTAEQKSSVHDPIEMARLADELPIEQVAKRWIVSSDPTEVAAAVQGYVDAGFTHLVFHAPGQDQSRFLTQFSADVVPLLRP.

Aspartate 44 lines the coenzyme F420-(gamma-Glu)n pocket. The active-site Proton donor is histidine 45. Coenzyme F420-(gamma-Glu)n is bound by residues threonine 81 and 112–113 (TG). The active-site Proton acceptor is glutamate 114. Coenzyme F420-(gamma-Glu)n-binding positions include asparagine 117, 180 to 181 (GG), and 183 to 184 (GV). Residues threonine 198, lysine 201, lysine 262, and arginine 286 each coordinate substrate.

The protein belongs to the F420-dependent glucose-6-phosphate dehydrogenase family. As to quaternary structure, homodimer.

It catalyses the reaction oxidized coenzyme F420-(gamma-L-Glu)(n) + D-glucose 6-phosphate + H(+) = 6-phospho-D-glucono-1,5-lactone + reduced coenzyme F420-(gamma-L-Glu)(n). Catalyzes the coenzyme F420-dependent oxidation of glucose 6-phosphate (G6P) to 6-phosphogluconolactone. The polypeptide is F420-dependent glucose-6-phosphate dehydrogenase (Kineococcus radiotolerans (strain ATCC BAA-149 / DSM 14245 / SRS30216)).